Consider the following 201-residue polypeptide: dCTP deaminase, dUMP-forming (201 aa).

DCTP contacts are provided by residues 101–106 (KSSLGR), aspartate 119, 127–129 (TLE), glutamine 148, tyrosine 162, and glutamine 174. The active-site Proton donor/acceptor is the glutamate 129.

The protein belongs to the dCTP deaminase family. Homotrimer.

The enzyme catalyses dCTP + 2 H2O = dUMP + NH4(+) + diphosphate. The protein operates within pyrimidine metabolism; dUMP biosynthesis; dUMP from dCTP: step 1/1. Bifunctional enzyme that catalyzes both the deamination of dCTP to dUTP and the hydrolysis of dUTP to dUMP without releasing the toxic dUTP intermediate. This chain is dCTP deaminase, dUMP-forming, found in Parafrankia sp. (strain EAN1pec).